Here is a 226-residue protein sequence, read N- to C-terminus: Endonuclease NucS (226 aa).

The protein belongs to the NucS endonuclease family.

It is found in the cytoplasm. In terms of biological role, cleaves both 3' and 5' ssDNA extremities of branched DNA structures. The sequence is that of Endonuclease NucS from Mycobacterium ulcerans (strain Agy99).